The following is an 823-amino-acid chain: Aminopeptidase O (823 aa).

Position 481 (His-481) interacts with Zn(2+). Catalysis depends on Glu-482, which acts as the Proton acceptor. Residues His-485 and Glu-504 each contribute to the Zn(2+) site. The short motif at 693–703 (RRPRKRKRGKR) is the Nucleolar localization signal element.

The protein belongs to the peptidase M1 family. The cofactor is Zn(2+). As to expression, expressed in testis, heart, brain, lung, liver, skeletal muscle, kidney and ovary. Expressed in vascular tissues.

The protein resides in the nucleus. Its subcellular location is the nucleolus. It localises to the cytoplasm. In terms of biological role, aminopeptidase which catalyzes the hydrolysis of amino acid residues from the N-terminus of peptide or protein substrates. The protein is Aminopeptidase O (Aopep) of Mus musculus (Mouse).